A 249-amino-acid polypeptide reads, in one-letter code: Triosephosphate isomerase (249 aa).

Substrate is bound at residue 9–11; that stretch reads NWK. The active-site Electrophile is the His95. Glu166 functions as the Proton acceptor in the catalytic mechanism. Substrate is bound by residues Gly172, Ser211, and 232–233; that span reads GG.

Belongs to the triosephosphate isomerase family. Homodimer.

Its subcellular location is the cytoplasm. It catalyses the reaction D-glyceraldehyde 3-phosphate = dihydroxyacetone phosphate. The protein operates within carbohydrate biosynthesis; gluconeogenesis. It functions in the pathway carbohydrate degradation; glycolysis; D-glyceraldehyde 3-phosphate from glycerone phosphate: step 1/1. In terms of biological role, involved in the gluconeogenesis. Catalyzes stereospecifically the conversion of dihydroxyacetone phosphate (DHAP) to D-glyceraldehyde-3-phosphate (G3P). The sequence is that of Triosephosphate isomerase from Legionella pneumophila (strain Lens).